An 80-amino-acid chain; its full sequence is Conotoxin Bu3 (80 aa).

The first 22 residues, 1-22, serve as a signal peptide directing secretion; sequence MKLMCVLIVSVLVLTACQLSTA. The propeptide occupies 23 to 51; that stretch reads DDTRDKQKDRLVRLFRKKRDSSDSGLLPR. 3 disulfide bridges follow: Cys53–Cys69, Cys60–Cys72, and Cys68–Cys79.

It belongs to the conotoxin O1 superfamily. In terms of tissue distribution, expressed by the venom duct.

The protein localises to the secreted. This chain is Conotoxin Bu3, found in Conus bullatus (Bubble cone).